The chain runs to 318 residues: Homeobox protein Nkx-2.5 (318 aa).

The homeobox DNA-binding region spans 137–196; it reads RRKPRVLFSQAQVYELERRFKQQRYLSPAERDQLASVLKLTSTQVKIWFQNRRYKCKRQR.

The protein belongs to the NK-2 homeobox family. Homodimer (via the homeobox); binds DNA as homodimer. Interacts (via the homeobox) with TBX5 (via the T-box); this complex binds DNA. Interacts with HIPK1 and HIPK2, but not HIPK3. Interacts with the C-terminal zinc finger of GATA4 through its homeobox domain. Also interacts with JARID2 which represses its ability to activate transcription of ANF. Interacts with FBLIM1. Interacts with TBX18. Interacts with histone methyltransferase NSD2 (via HMG box). Interacts with NEDD9. Interacts with TBX1.

It localises to the nucleus. In terms of biological role, transcription factor required for the development of the heart and the spleen. During heart development, acts as a transcriptional activator of NPPA/ANF in cooperation with GATA4. May cooperate with TBX2 to negatively modulate expression of NPPA/ANF in the atrioventricular canal. Binds to the core DNA motif of NPPA promoter. Together with PBX1, required for spleen development through a mechanism that involves CDKN2B repression. Positively regulates transcription of genes such as COL3A1 and MMP2, resulting in increased pulmonary endothelial fibrosis in response to hypoxia. This Rattus norvegicus (Rat) protein is Homeobox protein Nkx-2.5 (Nkx2-5).